We begin with the raw amino-acid sequence, 313 residues long: Postacrosomal sheath WW domain-binding protein (313 aa).

Residues 8–87 (TESRRGALIP…GLMSDCTIEQ (80 aa)) form the GRAM domain. 12 repeat units span residues 179 to 185 (YGPPPPG), 193 to 199 (YGTPPEG), 207 to 213 (YGAPPMG), 214 to 220 (YGAPPVG), 221 to 227 (YGVPPGG), 228 to 234 (YGVPPGG), 235 to 241 (YGVPPGG), 242 to 248 (YGAPPGG), 249 to 255 (YGVPPGG), 256 to 262 (YGAPPGG), 263 to 269 (YGAPPAG), and 270 to 276 (YGAPPAG). A 12 X 7 AA tandem repeat of Y-G-X-P-P-X-G region spans residues 179-276 (YGPPPPGYTV…PAGYGAPPAG (98 aa)). The short motif at 183–186 (PPGY) is the PPxY motif 1 element. Residues 254 to 264 (GGYGAPPGGYG) are compositionally biased toward gly residues. A disordered region spans residues 254–313 (GGYGAPPGGYGAPPAGYGAPPAGNEALPPAYEAPSAGNTAASHRSMTAQQETSLPTTSSS). Residues 265–276 (APPAGYGAPPAG) show a composition bias toward low complexity. A PPxY motif 2 motif is present at residues 281–284 (PPAY). Polar residues predominate over residues 289–313 (AGNTAASHRSMTAQQETSLPTTSSS).

Expressed in testis.

May play a role in meiotic resumption and pronuclear formation, mediated by a WW domain-signaling pathway during fertilization. This is Postacrosomal sheath WW domain-binding protein (WBP2NL) from Bos taurus (Bovine).